We begin with the raw amino-acid sequence, 63 residues long: Large ribosomal subunit protein uL29 (63 aa).

It belongs to the universal ribosomal protein uL29 family.

This chain is Large ribosomal subunit protein uL29, found in Hahella chejuensis (strain KCTC 2396).